Consider the following 243-residue polypeptide: Outer membrane protein A (243 aa).

5 beta stranded membrane-spanning segments follow: residues 1-8 (LTAKLGYP), 13-21 (LDIYTRLGG), 48-57 (PVFAGGVEWA), 62-69 (IATRLEYQ), and 88-96 (LLSLGVSYR). A run of 4 repeats spans residues 107–108 (AP), 109–110 (AP), 111–112 (AP), and 113–114 (AP). Positions 107 to 114 (APAPAPAP) are 4 X 2 AA tandem repeats of A-P. An OmpA-like domain is found at 116–243 (VQTKHFTLKS…RRVEIEVKGI (128 aa)). Cys-217 and Cys-229 form a disulfide bridge.

Belongs to the outer membrane OOP (TC 1.B.6) superfamily. OmpA family. As to quaternary structure, monomer and homodimer.

The protein resides in the cell outer membrane. In terms of biological role, with TolR probably plays a role in maintaining the position of the peptidoglycan cell wall in the periplasm. Acts as a porin with low permeability that allows slow penetration of small solutes; an internal gate slows down solute passage. Functionally, required for conjugation with F-type plasmids; probably serves as the mating receptor on recipient cells. The sequence is that of Outer membrane protein A from Escherichia fergusonii.